We begin with the raw amino-acid sequence, 322 residues long: Phospho-N-acetylmuramoyl-pentapeptide-transferase (322 aa).

Helical transmembrane passes span 10–30, 51–71, 79–99, 107–127, 146–166, 178–198, 203–223, 227–247, 250–270, and 302–322; these read YTAL…IPML, NGTP…TGLT, MAVG…DDFI, LGLK…YVAF, FVIN…VAIV, LASG…SSIA, VAVL…FNSY, VFMG…FSVL, SVLI…SVLI, and VVFI…IAVF.

This sequence belongs to the glycosyltransferase 4 family. MraY subfamily. Mg(2+) serves as cofactor.

Its subcellular location is the cell membrane. It catalyses the reaction UDP-N-acetyl-alpha-D-muramoyl-L-alanyl-gamma-D-glutamyl-meso-2,6-diaminopimeloyl-D-alanyl-D-alanine + di-trans,octa-cis-undecaprenyl phosphate = di-trans,octa-cis-undecaprenyl diphospho-N-acetyl-alpha-D-muramoyl-L-alanyl-D-glutamyl-meso-2,6-diaminopimeloyl-D-alanyl-D-alanine + UMP. The protein operates within cell wall biogenesis; peptidoglycan biosynthesis. Catalyzes the initial step of the lipid cycle reactions in the biosynthesis of the cell wall peptidoglycan: transfers peptidoglycan precursor phospho-MurNAc-pentapeptide from UDP-MurNAc-pentapeptide onto the lipid carrier undecaprenyl phosphate, yielding undecaprenyl-pyrophosphoryl-MurNAc-pentapeptide, known as lipid I. This is Phospho-N-acetylmuramoyl-pentapeptide-transferase from Clostridioides difficile (strain 630) (Peptoclostridium difficile).